The following is a 119-amino-acid chain: Thrombin-like enzyme TLBan (119 aa).

The Peptidase S1 domain occupies 1–112 (VIGGDECNIN…YLLWIQSIIA (112 aa)). Catalysis depends on charge relay system residues His-40 and Asp-59. A disulfide bridge links Cys-54 with Cys-118.

As to quaternary structure, monomer. Contains both N-linked carbohydrates and sialic acid. Expressed by the venom gland.

It localises to the secreted. Its activity is regulated as follows. Strongly inhibited by PMSF and slightly inhibited by EDTA and soybean trypsin inhibitor. Thrombin-like snake venom serine protease, with high clotting activity in vitro. Also has fibrinogenolytic ability, showing a fast degradation of fibrinogen Aalpha chain (FGA), a slow degradation of Bbeta chain (FGB) and no degradation of gamma chain. Also causes platelet aggregation in platelet rich plasma (PRP) and washed platelet suspension. The polypeptide is Thrombin-like enzyme TLBan (Bothrocophias andianus (Andean lancehead)).